Consider the following 303-residue polypeptide: Phytochrome-associated serine/threonine-protein phosphatase 1 (303 aa).

Positions 50, 52, 78, and 110 each coordinate Zn(2+). The active-site Proton donor is the H111. H160 and H234 together coordinate Zn(2+).

This sequence belongs to the PPP phosphatase family. PP-6 (PP-V) subfamily. As to quaternary structure, interacts with PHYA and PHYB, mostly when they are phosphorylated and in Pfr forms. Interacts with TAP46. Interacts with PIN1 and PIN2. Interacts with ABI5. Interacts with PIF3 and PIF4. Protein phosphatase 6 (PP6) holoenzyme is a heterotrimeric complex formed by the catalytic subunit FYPP, a SAPS domain-containing subunit (SAL) and a protein phosphatase 2A regulatory subunit A (PP2AA). The cofactor is Zn(2+). As to expression, mostly expressed in flowers. Also detected to a lower extent in stems and leaves. Expressed in roots.

It is found in the cytoplasm. The enzyme catalyses O-phospho-L-seryl-[protein] + H2O = L-seryl-[protein] + phosphate. It catalyses the reaction O-phospho-L-threonyl-[protein] + H2O = L-threonyl-[protein] + phosphate. In terms of biological role, catalytic subunit of protein phosphatase 6 (PP6). Dephosphorylates phosphorylated phytochromes, with a preference toward Pfr forms. Plays a major role in the photoperiodic control of flowering time in long days by modulating phytochrome signals in flowering time control. Involved in the regulation of polar auxin transport in roots. Dephosphorylates directly the auxin efflux carriers PIN1 and PIN2, thus promoting their proper polar localization in root cell plasma membrane. Acts antagonistically with the protein kinase PID to regulate the reversible phosphorylation of PIN and polar targeting, subsequently impacting polar auxin transport and plant development. Involved in the regulation of abscisic acid (ABA) signaling during seed germination and postgermination seedling growth. Functions as a negative regulator of ABA signaling through direct dephosphorylation and destabilization of ABI5. Acts antagonistically with the protein kinase SRK2E/SNRK2.6 to regulate ABI5 phosphorylation and ABA responses. Involved in the regulation of phosphorylation status in hypocotyl phototropism. Involved in the negative regulation of photomorphogenesis by controlling the stability and transcriptional activity of PIF3 and PIF4 proteins in the dark, via the regulation of their phosphorylation status. The protein is Phytochrome-associated serine/threonine-protein phosphatase 1 of Arabidopsis thaliana (Mouse-ear cress).